A 124-amino-acid polypeptide reads, in one-letter code: Secreted RxLR effector protein 49 (124 aa).

An N-terminal signal peptide occupies residues 1 to 22 (MIRRSPLVAVILFVAITHVVLA). The RxLR signature appears at 57 to 60 (RSLR).

It belongs to the RxLR effector family.

Its subcellular location is the secreted. The protein resides in the host cytoplasm. It localises to the host nucleus. Effector that acts as a broad suppressor of cell death to interrupt plant immunity. Inhibits cell death induced by cell death-inducing proteins, including the PAMP elicitor INF1 from P.infestans. This chain is Secreted RxLR effector protein 49, found in Plasmopara viticola (Downy mildew of grapevine).